Here is a 151-residue protein sequence, read N- to C-terminus: UPF0208 membrane protein YPTB2595 (151 aa).

A run of 2 helical transmembrane segments spans residues 46-66 and 69-89; these read FGIR…IALG and LGPA…GLWW.

It belongs to the UPF0208 family.

The protein localises to the cell inner membrane. In Yersinia pseudotuberculosis serotype I (strain IP32953), this protein is UPF0208 membrane protein YPTB2595.